The following is a 224-amino-acid chain: LexA repressor (224 aa).

The H-T-H motif DNA-binding region spans 31 to 51 (RAEIAAELGFKSANAAEEHLQ). Catalysis depends on for autocatalytic cleavage activity residues S142 and K179.

It belongs to the peptidase S24 family. Homodimer.

It catalyses the reaction Hydrolysis of Ala-|-Gly bond in repressor LexA.. Functionally, represses a number of genes involved in the response to DNA damage (SOS response), including recA and lexA. In the presence of single-stranded DNA, RecA interacts with LexA causing an autocatalytic cleavage which disrupts the DNA-binding part of LexA, leading to derepression of the SOS regulon and eventually DNA repair. In Acidovorax ebreus (strain TPSY) (Diaphorobacter sp. (strain TPSY)), this protein is LexA repressor.